Consider the following 123-residue polypeptide: Holo-[acyl-carrier-protein] synthase (123 aa).

2 residues coordinate Mg(2+): aspartate 8 and glutamate 55.

This sequence belongs to the P-Pant transferase superfamily. AcpS family. Mg(2+) serves as cofactor.

The protein localises to the cytoplasm. The catalysed reaction is apo-[ACP] + CoA = holo-[ACP] + adenosine 3',5'-bisphosphate + H(+). Functionally, transfers the 4'-phosphopantetheine moiety from coenzyme A to a Ser of acyl-carrier-protein. This is Holo-[acyl-carrier-protein] synthase from Caldicellulosiruptor saccharolyticus (strain ATCC 43494 / DSM 8903 / Tp8T 6331).